The sequence spans 839 residues: LPS-assembly protein LptD (839 aa).

The signal sequence occupies residues 1–21; sequence MAIGITACVLSLINYQGLAYS.

Belongs to the LptD family. As to quaternary structure, component of the lipopolysaccharide transport and assembly complex. Interacts with LptE and LptA.

It is found in the cell outer membrane. In terms of biological role, together with LptE, is involved in the assembly of lipopolysaccharide (LPS) at the surface of the outer membrane. In Legionella pneumophila (strain Paris), this protein is LPS-assembly protein LptD.